A 139-amino-acid chain; its full sequence is D-ribose pyranase (139 aa).

His-20 (proton donor) is an active-site residue. Residues Asp-28, His-106, and 128–130 (YAN) contribute to the substrate site.

This sequence belongs to the RbsD / FucU family. RbsD subfamily. Homodecamer.

The protein localises to the cytoplasm. The enzyme catalyses beta-D-ribopyranose = beta-D-ribofuranose. Its pathway is carbohydrate metabolism; D-ribose degradation; D-ribose 5-phosphate from beta-D-ribopyranose: step 1/2. Functionally, catalyzes the interconversion of beta-pyran and beta-furan forms of D-ribose. The sequence is that of D-ribose pyranase from Pectobacterium atrosepticum (strain SCRI 1043 / ATCC BAA-672) (Erwinia carotovora subsp. atroseptica).